The sequence spans 185 residues: Signal peptidase I P (185 aa).

Residues 1 to 14 (MFDKEKRKKSNIID) are Cytoplasmic-facing. Residues 15-34 (WIKAILIALILVFLVRTFLF) traverse the membrane as a helical segment. The Extracellular segment spans residues 35–185 (EPYIVQGESM…FPLDRIRHAK (151 aa)). Active-site residues include S43 and K85.

Belongs to the peptidase S26 family.

The protein localises to the cell membrane. The catalysed reaction is Cleavage of hydrophobic, N-terminal signal or leader sequences from secreted and periplasmic proteins.. The chain is Signal peptidase I P (sipP) from Bacillus subtilis subsp. natto.